Consider the following 364-residue polypeptide: Uroporphyrinogen decarboxylase (364 aa).

Residues 28-32 (RQAGR), aspartate 78, tyrosine 160, threonine 215, and histidine 333 each bind substrate.

It belongs to the uroporphyrinogen decarboxylase family. As to quaternary structure, homodimer.

It localises to the cytoplasm. The enzyme catalyses uroporphyrinogen III + 4 H(+) = coproporphyrinogen III + 4 CO2. It functions in the pathway porphyrin-containing compound metabolism; protoporphyrin-IX biosynthesis; coproporphyrinogen-III from 5-aminolevulinate: step 4/4. In terms of biological role, catalyzes the decarboxylation of four acetate groups of uroporphyrinogen-III to yield coproporphyrinogen-III. The protein is Uroporphyrinogen decarboxylase of Burkholderia thailandensis (strain ATCC 700388 / DSM 13276 / CCUG 48851 / CIP 106301 / E264).